The following is a 180-amino-acid chain: NADH-quinone oxidoreductase subunit I (180 aa).

4Fe-4S ferredoxin-type domains follow at residues 48–80 (IVLT…LQKS) and 90–119 (EFFR…LTPD). Cysteine 60, cysteine 63, cysteine 66, cysteine 70, cysteine 99, cysteine 102, cysteine 105, and cysteine 109 together coordinate [4Fe-4S] cluster. The span at 161-174 (KPKGDAENEAKPID) shows a compositional bias: basic and acidic residues. Residues 161–180 (KPKGDAENEAKPIDVKSLLP) are disordered.

It belongs to the complex I 23 kDa subunit family. NDH-1 is composed of 13 different subunits. Subunits NuoA, H, J, K, L, M, N constitute the membrane sector of the complex. Requires [4Fe-4S] cluster as cofactor.

The protein resides in the cell inner membrane. It catalyses the reaction a quinone + NADH + 5 H(+)(in) = a quinol + NAD(+) + 4 H(+)(out). Its function is as follows. NDH-1 shuttles electrons from NADH, via FMN and iron-sulfur (Fe-S) centers, to quinones in the respiratory chain. The immediate electron acceptor for the enzyme in this species is believed to be ubiquinone. Couples the redox reaction to proton translocation (for every two electrons transferred, four hydrogen ions are translocated across the cytoplasmic membrane), and thus conserves the redox energy in a proton gradient. The sequence is that of NADH-quinone oxidoreductase subunit I from Shewanella oneidensis (strain ATCC 700550 / JCM 31522 / CIP 106686 / LMG 19005 / NCIMB 14063 / MR-1).